Here is a 477-residue protein sequence, read N- to C-terminus: Aspartyl/glutamyl-tRNA(Asn/Gln) amidotransferase subunit B (477 aa).

This sequence belongs to the GatB/GatE family. GatB subfamily. As to quaternary structure, heterotrimer of A, B and C subunits.

The catalysed reaction is L-glutamyl-tRNA(Gln) + L-glutamine + ATP + H2O = L-glutaminyl-tRNA(Gln) + L-glutamate + ADP + phosphate + H(+). It catalyses the reaction L-aspartyl-tRNA(Asn) + L-glutamine + ATP + H2O = L-asparaginyl-tRNA(Asn) + L-glutamate + ADP + phosphate + 2 H(+). In terms of biological role, allows the formation of correctly charged Asn-tRNA(Asn) or Gln-tRNA(Gln) through the transamidation of misacylated Asp-tRNA(Asn) or Glu-tRNA(Gln) in organisms which lack either or both of asparaginyl-tRNA or glutaminyl-tRNA synthetases. The reaction takes place in the presence of glutamine and ATP through an activated phospho-Asp-tRNA(Asn) or phospho-Glu-tRNA(Gln). This chain is Aspartyl/glutamyl-tRNA(Asn/Gln) amidotransferase subunit B, found in Coxiella burnetii (strain RSA 493 / Nine Mile phase I).